A 750-amino-acid polypeptide reads, in one-letter code: Cullin-5 (750 aa).

Residues 678-739 (RFFKLQAAIV…QEYIRRTTDD (62 aa)) form the Cullin neddylation domain. Lys691 is covalently cross-linked (Glycyl lysine isopeptide (Lys-Gly) (interchain with G-Cter in NEDD8)).

This sequence belongs to the cullin family. Neddylated; which enhances the ubiquitination activity of SCF-like complex.

The protein operates within protein modification; protein ubiquitination. Probable core component of cullin-based SCF-like E3 ubiquitin-protein ligase complexes which mediate the ubiquitination and subsequent proteasomal degradation of target proteins. The E3 ubiquitin-protein ligase activity of the complex is dependent on the neddylation of the cullin subunit. This Dictyostelium discoideum (Social amoeba) protein is Cullin-5 (culE).